Reading from the N-terminus, the 438-residue chain is Glutamate-1-semialdehyde 2,1-aminomutase (438 aa).

At Lys-277 the chain carries N6-(pyridoxal phosphate)lysine.

The protein belongs to the class-III pyridoxal-phosphate-dependent aminotransferase family. HemL subfamily. As to quaternary structure, homodimer. Requires pyridoxal 5'-phosphate as cofactor.

It localises to the cytoplasm. It catalyses the reaction (S)-4-amino-5-oxopentanoate = 5-aminolevulinate. Its pathway is porphyrin-containing compound metabolism; protoporphyrin-IX biosynthesis; 5-aminolevulinate from L-glutamyl-tRNA(Glu): step 2/2. It functions in the pathway porphyrin-containing compound metabolism; chlorophyll biosynthesis. This is Glutamate-1-semialdehyde 2,1-aminomutase from Synechococcus sp. (strain CC9311).